A 243-amino-acid chain; its full sequence is MYQWIQRDSDVHQRWIWCRRLLIVSLVSALMSVLQVIVFRFVDPPLSMTMVGRYLEAWSDRQWNFRLHYVWCDLEQIAPSVPISLVAAEDQRFPFHHGFDFDAIKKALGRHSRGGHLRGASTISQQVAKNLFLWSGRSFVRKGLEGWYTFWIELFWPKRRILEIYANIAEFGDGVYGVQAAARRYLGKGAADLDESDAAQLAAVLPSPRHYNIQHPGPYIRWRSSWIQRQAKQLGGSAYLDMH.

The chain crosses the membrane as a helical span at residues 21–43; it reads LLIVSLVSALMSVLQVIVFRFVD.

Belongs to the glycosyltransferase 51 family.

The protein resides in the cell inner membrane. The enzyme catalyses [GlcNAc-(1-&gt;4)-Mur2Ac(oyl-L-Ala-gamma-D-Glu-L-Lys-D-Ala-D-Ala)](n)-di-trans,octa-cis-undecaprenyl diphosphate + beta-D-GlcNAc-(1-&gt;4)-Mur2Ac(oyl-L-Ala-gamma-D-Glu-L-Lys-D-Ala-D-Ala)-di-trans,octa-cis-undecaprenyl diphosphate = [GlcNAc-(1-&gt;4)-Mur2Ac(oyl-L-Ala-gamma-D-Glu-L-Lys-D-Ala-D-Ala)](n+1)-di-trans,octa-cis-undecaprenyl diphosphate + di-trans,octa-cis-undecaprenyl diphosphate + H(+). It participates in cell wall biogenesis; peptidoglycan biosynthesis. Functionally, peptidoglycan polymerase that catalyzes glycan chain elongation from lipid-linked precursors. This chain is Biosynthetic peptidoglycan transglycosylase, found in Xylella fastidiosa (strain Temecula1 / ATCC 700964).